Reading from the N-terminus, the 789-residue chain is E3 UFM1-protein ligase 1 (789 aa).

The required for E3 UFM1-protein ligase activity stretch occupies residues 2 to 212 (AADWEEIRRL…VSNLITRYGF (211 aa)). 2 disordered regions span residues 407–470 (LENS…TGRN) and 743–763 (SKKA…ADTI). The segment covering 444–453 (KIKKTKKKGR) has biased composition (basic residues). Positions 748 to 760 (QEDDNKTEEEEGA) are enriched in acidic residues.

It belongs to the UFL1 family. Catalytic component of the UFM1 ribosome E3 ligase (UREL) complex. Interacts with E2-like enzyme UFC1.

The protein localises to the endoplasmic reticulum membrane. It localises to the cytoplasm. Its subcellular location is the cytosol. It is found in the nucleus. The protein resides in the chromosome. In terms of biological role, E3 protein ligase that mediates ufmylation, the covalent attachment of the ubiquitin-like modifier UFM1 to lysine residues on target proteins, and which plays a key role in various processes, such as ribosome recycling, response to DNA damage, interferon response or reticulophagy (also called ER-phagy). As part of the UREL complex, plays a key role in ribosome recycling by catalyzing mono-ufmylation of RPL26/uL24 subunit of the 60S ribosome. Ufmylation of RPL26/uL24 occurs on free 60S ribosomes following ribosome dissociation: it weakens the junction between post-termination 60S subunits and SEC61 translocons, promoting release and recycling of the large ribosomal subunit from the endoplasmic reticulum membrane. Ufmylation of RPL26/uL24 and subsequent 60S ribosome recycling either take place after normal termination of translation or after ribosome stalling during cotranslational translocation at the endoplasmic reticulum. Involved in reticulophagy in response to endoplasmic reticulum stress by mediating ufmylation of proteins such as CYB5R3 and RPN1, thereby promoting lysosomal degradation of ufmylated proteins. Ufmylation in response to endoplasmic reticulum stress is essential for processes such as hematopoiesis, blood vessel morphogenesis or inflammatory response. In Gallus gallus (Chicken), this protein is E3 UFM1-protein ligase 1.